The following is a 788-amino-acid chain: Leucine-rich repeat and fibronectin type-III domain-containing protein 2 (788 aa).

Positions 1–20 (METLLGGLLAFGMAFAVVDA) are cleaved as a signal peptide. Residues 21–52 (CPKYCVCQNLSESLGTLCPSKGLLFVPPDIDR) form the LRRNT domain. Residues 21–534 (CPKYCVCQNL…MHSQILGGTM (514 aa)) lie on the Extracellular side of the membrane. N-linked (GlcNAc...) asparagine glycosylation occurs at asparagine 29. 7 LRR repeats span residues 53 to 74 (RTVE…DFAN), 77 to 98 (GLVD…SFLD), 101 to 122 (SLRS…TLRG), 125 to 146 (NLQH…AFED), 150 to 171 (TLED…SVRR), 174 to 195 (NLHQ…TFAD), and 198 to 219 (KLAR…PIFA). Residues 242–288 (NPLHCNCELLWLRRLERDDDLETCGSPGSLKGRYFWHIREEEFVCEP) form the LRRCT domain. The region spanning 289-375 (PLITQHTHKL…GEATATVEVS (87 aa)) is the Ig-like domain. Cysteine 310 and cysteine 359 are disulfide-bonded. N-linked (GlcNAc...) asparagine glycans are attached at residues asparagine 332, asparagine 341, and asparagine 384. The disordered stretch occupies residues 383 to 423 (SNSTSRMAPPKSRLSDITGSSKTSRGGGGSGAGEPPKSTPE). The region spanning 422 to 518 (PERAVLVSDV…GCAQFFTKAD (97 aa)) is the Fibronectin type-III domain. A helical membrane pass occupies residues 535-555 (ILVIGGIIVATLLVFIVILMV). Over 556 to 788 (RYKVCNHDTP…SSEWVMESTV (233 aa)) the chain is Cytoplasmic. Residues 620 to 631 (CDSSSSSSLGSG) are compositionally biased toward low complexity. 2 disordered regions span residues 620 to 655 (CDSS…PSLD) and 668 to 711 (SQRK…RSLL). Over residues 642 to 651 (RLPPPAPRPK) the composition is skewed to pro residues. Positions 785–788 (ESTV) match the PDZ-binding motif.

It belongs to the LRFN family. As to quaternary structure, forms heteromeric complexes with LRFN1, LRFN3, LRFN4 and LRFN5. Can form homomeric complexes, but not across cell junctions. Interacts with DLG4. Directly interacts with DLG1, DLG2 and DLG3. Directly interacts with 2 NMDA receptor subunits GRIN1 and GRIN2A. Post-translationally, glycosylated. As to expression, predominantly expressed in the brain, with a weak, but broad expression in the cerebral cortex and diencephalic nuclei. Strongly expressed in both the pyramidal layer and the dentate gyrus of the hippocampus. Also detected in other parts of the central nervous system, including the olfactory bulb, pons, cerebellum, and medulla oblongata, as well as in the peripheral nervous system, such as the ganglia of cranial nerves and the dorsal root ganglion during gestation.

It localises to the membrane. Its subcellular location is the synapse. It is found in the postsynaptic cell membrane. Functionally, promotes neurite outgrowth in hippocampal neurons. Enhances the cell surface expression of 2 NMDA receptor subunits GRIN1 and GRIN2A. May play a role in redistributing DLG4 to the cell periphery. This Mus musculus (Mouse) protein is Leucine-rich repeat and fibronectin type-III domain-containing protein 2 (Lrfn2).